The primary structure comprises 177 residues: Transcription termination/antitermination protein NusG (177 aa).

The region spanning 126 to 156 (PGETVRVIDGPFADFNGVVEEVNYEKSRIQV) is the KOW domain.

This sequence belongs to the NusG family.

In terms of biological role, participates in transcription elongation, termination and antitermination. The chain is Transcription termination/antitermination protein NusG from Pseudomonas aeruginosa (strain ATCC 15692 / DSM 22644 / CIP 104116 / JCM 14847 / LMG 12228 / 1C / PRS 101 / PAO1).